The chain runs to 486 residues: Small ribosomal subunit protein uS4m (486 aa).

The 70-residue stretch at K103–L172 folds into the S4 RNA-binding domain.

The protein belongs to the universal ribosomal protein uS4 family. Component of the mitochondrial small ribosomal subunit (mt-SSU). Mature yeast 74S mitochondrial ribosomes consist of a small (37S) and a large (54S) subunit. The 37S small subunit contains a 15S ribosomal RNA (15S mt-rRNA) and 34 different proteins. The 54S large subunit contains a 21S rRNA (21S mt-rRNA) and 46 different proteins. uS3m, uS4m and uS5m form the narrow entry site of the mRNA channel.

Its subcellular location is the mitochondrion. Its function is as follows. Component of the mitochondrial ribosome (mitoribosome), a dedicated translation machinery responsible for the synthesis of mitochondrial genome-encoded proteins, including at least some of the essential transmembrane subunits of the mitochondrial respiratory chain. The mitoribosomes are attached to the mitochondrial inner membrane and translation products are cotranslationally integrated into the membrane. In Saccharomyces cerevisiae (strain ATCC 204508 / S288c) (Baker's yeast), this protein is Small ribosomal subunit protein uS4m (NAM9).